The chain runs to 319 residues: D-alanine--D-alanine ligase (319 aa).

The 196-residue stretch at K120–E315 folds into the ATP-grasp domain. D147 to L198 contributes to the ATP binding site. D270, E282, and N284 together coordinate Mg(2+).

It belongs to the D-alanine--D-alanine ligase family. Mg(2+) serves as cofactor. The cofactor is Mn(2+).

It localises to the cytoplasm. It catalyses the reaction 2 D-alanine + ATP = D-alanyl-D-alanine + ADP + phosphate + H(+). It participates in cell wall biogenesis; peptidoglycan biosynthesis. Cell wall formation. In Thermus thermophilus (strain ATCC BAA-163 / DSM 7039 / HB27), this protein is D-alanine--D-alanine ligase.